A 130-amino-acid chain; its full sequence is UPF0225 protein CE1570 (130 aa).

It belongs to the UPF0225 family.

This is UPF0225 protein CE1570 from Corynebacterium efficiens (strain DSM 44549 / YS-314 / AJ 12310 / JCM 11189 / NBRC 100395).